The chain runs to 893 residues: Desmocollin-1 (893 aa).

The first 29 residues, 1-29 (MAVASAAPGSIFWKQLLFSLLVLILFCDA), serve as a signal peptide directing secretion. Positions 30 to 132 (CQKISLQVPS…KDAVLRRTKR (103 aa)) are excised as a propeptide. Cadherin domains follow at residues 133–240 (RWAP…APYF), 241–352 (ENKL…APYF), 353–470 (TETS…GPEC), 471–574 (QPPV…DHPP), and 575–682 (QIKQ…LSRE). Over 133–692 (RWAPIPCSLM…AALANVFLGK (560 aa)) the chain is Extracellular. N-linked (GlcNAc...) asparagine glycosylation occurs at Asn-163. Thr-383 bears the Phosphothreonine mark. N-linked (GlcNAc...) asparagine glycans are attached at residues Asn-398 and Asn-545. Residues 693-715 (WAILAMVLGSVLLLCILFTCFCV) traverse the membrane as a helical segment. Topologically, residues 716 to 893 (TVKKTVKKCF…RTLAKTCVKK (178 aa)) are cytoplasmic.

Binds to JUP/plakoglobin. In terms of processing, isoform 1A is phosphorylated on a serine but isoform 1B is not. In terms of tissue distribution, epidermis and weakly in tongue papillae.

The protein localises to the cell membrane. It is found in the cell junction. The protein resides in the desmosome. Its function is as follows. A component of desmosome cell-cell junctions which are required for positive regulation of cellular adhesion. Required for desmosome adhesion strength between the granular layers of the epidermis, as a result moderates epidermal proliferation and differentiation. Is therefore required to maintain postnatal epidermal barrier function and normal hair follicle morphology into adulthood. This is Desmocollin-1 (DSC1) from Bos taurus (Bovine).